A 275-amino-acid polypeptide reads, in one-letter code: N-acetyltransferase YodP (275 aa).

Positions 125–271 constitute an N-acetyltransferase domain; that stretch reads FTMRKAETND…AEGLENMNIW (147 aa).

This sequence belongs to the acetyltransferase family.

It carries out the reaction (3S)-3,6-diaminohexanoate + acetyl-CoA = (3S)-6-acetamido-3-aminohexanoate + CoA + H(+). In terms of biological role, in vitro, is able to catalyze the acetylation of beta-lysine to N6-acetyl-beta-lysine, an archaeal osmolyte produced by methanogenic archaea. Its physiological function has not yet been elucidated. The sequence is that of N-acetyltransferase YodP (yodP) from Bacillus subtilis (strain 168).